The sequence spans 292 residues: NAC domain-containing protein 105 (292 aa).

In terms of domain architecture, NAC spans 12-162 (IPPGFRFHPT…GWVVCRAFKK (151 aa)). A DNA-binding region spans residues 112–168 (IGMRKTLVFYRGRAPNGQKSDWIIHEYYSLESHQNSPPQEEGWVVCRAFKKRTTIPT). The segment covering 237–259 (LPQLESPSLPSEITPHSTTFSEN) has biased composition (polar residues). The segment at 237–269 (LPQLESPSLPSEITPHSTTFSENSSRKDDMSSE) is disordered. Basic and acidic residues predominate over residues 260 to 269 (SSRKDDMSSE).

Belongs to the plant vascular related NAC-domain protein family. Interacts with NAC030/VND7. As to expression, detected in root protoxylem and metaxylem poles and in vessels of protoxylems, outermost metaxylems, inner metaxylems, shoots and hypocotyls. Expressed in roots, hypocotyls, cotyledons and leaves. Present in developing xylems. Present in root developing xylems. Specifically expressed in vessels but not in interfascicular fibers in stems.

The protein resides in the nucleus. Functionally, transcription activator that binds to the secondary wall NAC binding element (SNBE), 5'-(T/A)NN(C/T)(T/C/G)TNNNNNNNA(A/C)GN(A/C/T)(A/T)-3', in the promoter of target genes. Involved in xylem formation by promoting the expression of secondary wall-associated transcription factors and of genes involved in secondary wall biosynthesis and programmed cell death, genes driven by the secondary wall NAC binding element (SNBE). Triggers thickening of secondary walls. The chain is NAC domain-containing protein 105 from Arabidopsis thaliana (Mouse-ear cress).